The primary structure comprises 232 residues: Ubiquinone biosynthesis O-methyltransferase (232 aa).

Positions 36, 55, 76, and 120 each coordinate S-adenosyl-L-methionine.

This sequence belongs to the methyltransferase superfamily. UbiG/COQ3 family.

It catalyses the reaction a 3-demethylubiquinol + S-adenosyl-L-methionine = a ubiquinol + S-adenosyl-L-homocysteine + H(+). The enzyme catalyses a 3-(all-trans-polyprenyl)benzene-1,2-diol + S-adenosyl-L-methionine = a 2-methoxy-6-(all-trans-polyprenyl)phenol + S-adenosyl-L-homocysteine + H(+). Its pathway is cofactor biosynthesis; ubiquinone biosynthesis. Its function is as follows. O-methyltransferase that catalyzes the 2 O-methylation steps in the ubiquinone biosynthetic pathway. This is Ubiquinone biosynthesis O-methyltransferase from Burkholderia thailandensis (strain ATCC 700388 / DSM 13276 / CCUG 48851 / CIP 106301 / E264).